The chain runs to 128 residues: Riboflavin kinase (128 aa).

12–17 (GKGEGK) provides a ligand contact to CDP. Residues T41 and N43 each coordinate Mg(2+). 2 residues coordinate FMN: T97 and E105. 110–113 (IKLR) contacts CDP.

It belongs to the archaeal riboflavin kinase family. The cofactor is Mg(2+).

It catalyses the reaction riboflavin + CTP = CDP + FMN + H(+). Its pathway is cofactor biosynthesis; FMN biosynthesis; FMN from riboflavin (CTP route): step 1/1. Its function is as follows. Catalyzes the CTP-dependent phosphorylation of riboflavin (vitamin B2) to form flavin mononucleotide (FMN). This chain is Riboflavin kinase, found in Methanococcus aeolicus (strain ATCC BAA-1280 / DSM 17508 / OCM 812 / Nankai-3).